The sequence spans 90 residues: Transcriptional repressor SdpR (90 aa).

The region spanning 1–87 (MNNVFKAISD…WMLNFINKGD (87 aa)) is the HTH arsR-type domain. The H-T-H motif DNA-binding region spans 39 to 62 (PSISHHLNILKQAEVISDHRKGQF).

It is found in the cytoplasm. In terms of biological role, represses the transcription of the sdpIR operon and of several other operons that probably contribute to delaying commitment to sporulation. This is Transcriptional repressor SdpR (sdpR) from Bacillus subtilis (strain 168).